The sequence spans 585 residues: Tyramine beta-hydroxylase (585 aa).

Residues 1–21 (MKCANAAALLFFVLCDIGVHG) form the signal peptide. In terms of domain architecture, DOMON spans 31–142 (SNVTVKWQTD…GTTQFYIAAS (112 aa)). Asn-32 and Asn-71 each carry an N-linked (GlcNAc...) asparagine glycan. Tyr-206 is a catalytic residue. 2 cysteine pairs are disulfide-bonded: Cys-208/Cys-258 and Cys-247/Cys-270. 2 residues coordinate Cu(2+): His-240 and His-241. Positions 308, 386, and 388 each coordinate Cu(2+). Disulfide bonds link Cys-365-Cys-477, Cys-369-Cys-534, and Cys-440-Cys-462. The active site involves His-386. The N-linked (GlcNAc...) asparagine glycan is linked to Asn-449. Cu(2+) is bound at residue Met-461. Asn-483 carries N-linked (GlcNAc...) asparagine glycosylation.

The protein belongs to the copper type II ascorbate-dependent monooxygenase family. Cu(2+) is required as a cofactor.

It localises to the cytoplasmic vesicle. The protein localises to the secretory vesicle. The protein resides in the synaptic vesicle. The enzyme catalyses tyramine + L-ascorbate + O2 = (R)-octopamine + L-dehydroascorbate + H2O. Functionally, catalyzes the hydroxylation of tyramine into octopamine, a neurotransmitter involved in pharyngeal pumping and egg laying. The chain is Tyramine beta-hydroxylase (tbh-1) from Caenorhabditis briggsae.